A 320-amino-acid chain; its full sequence is tRNA uridine(34) hydroxylase (320 aa).

One can recognise a Rhodanese domain in the interval 123-217; the sequence is EDEDTVILDA…YGKDPETKGQ (95 aa). The Cysteine persulfide intermediate role is filled by Cys177.

Belongs to the TrhO family.

The catalysed reaction is uridine(34) in tRNA + AH2 + O2 = 5-hydroxyuridine(34) in tRNA + A + H2O. Its function is as follows. Catalyzes oxygen-dependent 5-hydroxyuridine (ho5U) modification at position 34 in tRNAs. This Staphylococcus haemolyticus (strain JCSC1435) protein is tRNA uridine(34) hydroxylase.